We begin with the raw amino-acid sequence, 332 residues long: Nucleoid-associated protein VIBHAR_03026 (332 aa).

This sequence belongs to the YejK family.

Its subcellular location is the cytoplasm. The protein localises to the nucleoid. This Vibrio campbellii (strain ATCC BAA-1116) protein is Nucleoid-associated protein VIBHAR_03026.